Here is a 207-residue protein sequence, read N- to C-terminus: FMN-dependent NADH:quinone oxidoreductase (207 aa).

Residues S10, 16–18 (SIS), 96–99 (MYNL), and 141–144 (SRGG) each bind FMN.

The protein belongs to the azoreductase type 1 family. Homodimer. FMN serves as cofactor.

It catalyses the reaction 2 a quinone + NADH + H(+) = 2 a 1,4-benzosemiquinone + NAD(+). It carries out the reaction N,N-dimethyl-1,4-phenylenediamine + anthranilate + 2 NAD(+) = 2-(4-dimethylaminophenyl)diazenylbenzoate + 2 NADH + 2 H(+). Quinone reductase that provides resistance to thiol-specific stress caused by electrophilic quinones. In terms of biological role, also exhibits azoreductase activity. Catalyzes the reductive cleavage of the azo bond in aromatic azo compounds to the corresponding amines. The polypeptide is FMN-dependent NADH:quinone oxidoreductase (Nostoc sp. (strain PCC 7120 / SAG 25.82 / UTEX 2576)).